Here is a 403-residue protein sequence, read N- to C-terminus: Histidine--tRNA ligase (403 aa).

The protein belongs to the class-II aminoacyl-tRNA synthetase family. Homodimer.

The protein resides in the cytoplasm. It carries out the reaction tRNA(His) + L-histidine + ATP = L-histidyl-tRNA(His) + AMP + diphosphate + H(+). The sequence is that of Histidine--tRNA ligase from Sulfurimonas denitrificans (strain ATCC 33889 / DSM 1251) (Thiomicrospira denitrificans (strain ATCC 33889 / DSM 1251)).